Consider the following 149-residue polypeptide: Calmodulin (149 aa).

The residue at position 2 (alanine 2) is an N-acetylalanine. 4 EF-hand domains span residues 8–43, 44–79, 81–116, and 117–149; these read EQIA…LGQN, PTEA…KMKD, DSEE…LGEK, and LTDE…MTSK. Aspartate 21, aspartate 23, aspartate 25, threonine 27, glutamate 32, aspartate 57, aspartate 59, aspartate 61, threonine 63, glutamate 68, aspartate 94, aspartate 96, aspartate 98, and glutamate 105 together coordinate Ca(2+). An N6,N6,N6-trimethyllysine modification is found at lysine 116. 5 residues coordinate Ca(2+): aspartate 130, aspartate 132, aspartate 134, glutamine 136, and glutamate 141.

The protein belongs to the calmodulin family.

Functionally, calmodulin mediates the control of a large number of enzymes, ion channels and other proteins by Ca(2+). Among the enzymes to be stimulated by the calmodulin-Ca(2+) complex are a number of protein kinases and phosphatases. This chain is Calmodulin, found in Renilla reniformis (Sea pansy).